Consider the following 434-residue polypeptide: Monodehydroascorbate reductase, seedling isozyme (434 aa).

FAD contacts are provided by residues 13–16, E40, R47, K52, I95, and 146–147; these read GGVA and RE. NAD(+) is bound by residues 171–177, E195, R201, and G260; that span reads GGYIGLE. Residue 173 to 177 participates in NADP(+) binding; it reads YIGLE. NADP(+) is bound by residues R201 and G260. D297 provides a ligand contact to FAD. Residue 313 to 314 coordinates NAD(+); it reads EH. 313–314 serves as a coordination point for NADP(+); the sequence is EH. Position 315 (V315) interacts with FAD. R319 contacts L-ascorbate. Y348 lines the FAD pocket. Y348 is an NAD(+) binding site. An NADP(+)-binding site is contributed by Y348. Residue R350 coordinates L-ascorbate.

It belongs to the FAD-dependent oxidoreductase family. It depends on FAD as a cofactor.

The protein localises to the cytoplasm. It carries out the reaction 2 monodehydro-L-ascorbate radical + NADH + H(+) = 2 L-ascorbate + NAD(+). Catalyzes the conversion of monodehydroascorbate to ascorbate, oxidizing NADH in the process. This is Monodehydroascorbate reductase, seedling isozyme from Cucumis sativus (Cucumber).